We begin with the raw amino-acid sequence, 342 residues long: MVTVRKRNVKVFTFAFVLITVTSFLLNYKHQVTMTTWDPKHIISQFSEQVRKLIKFPRRPCSCSTCISELGHSLWFDQRFNSTMQPFLTSQNALIPEDSYRWWLKLQGEKSPKNINDTLKELFGIIPGDRDPLQERGTFSCRRCAVVGNSGNLRQSQYGQDIDSHDFVLRMNRAPTIGYESDVGSKTTHHFVYPESYKELAENVSMIVIPFKTLDLRWIVTALTTGTINFTYVPVPRKIKVRKEKVLIYNPSFIKYVYENWLQNHGRYPSTGLLSVIFALHVCDEVNVYGFGADSKGHWHHYWENNASAGAFRQTGVHDGDFEFNVTLTLASIEKIKFFKGR.

The Cytoplasmic portion of the chain corresponds to 1–10 (MVTVRKRNVK). A helical; Signal-anchor for type II membrane protein membrane pass occupies residues 11–28 (VFTFAFVLITVTSFLLNY). Residues 29-342 (KHQVTMTTWD…IEKIKFFKGR (314 aa)) lie on the Lumenal side of the membrane. 3 disulfide bridges follow: cysteine 61–cysteine 66, cysteine 63–cysteine 141, and cysteine 144–cysteine 283. Asparagine 81 is a glycosylation site (N-linked (GlcNAc...) asparagine). Substrate is bound at residue glutamine 107. The N-linked (GlcNAc...) asparagine glycan is linked to asparagine 116. Substrate-binding residues include asparagine 149 and asparagine 172. 2 N-linked (GlcNAc...) asparagine glycosylation sites follow: asparagine 203 and asparagine 229. Residues tyrosine 232, tyrosine 268, glycine 272, glycine 292, and histidine 301 each contribute to the substrate site. Asparagine 306 is a glycosylation site (N-linked (GlcNAc...) asparagine). Residue histidine 318 coordinates substrate. A glycan (N-linked (GlcNAc...) asparagine) is linked at asparagine 325.

This sequence belongs to the glycosyltransferase 29 family. In terms of processing, the soluble form derives from the membrane form by proteolytic processing.

Its subcellular location is the golgi apparatus. It localises to the golgi stack membrane. The protein resides in the secreted. The enzyme catalyses a beta-D-galactosyl-(1-&gt;3)-N-acetyl-alpha-D-galactosaminyl derivative + CMP-N-acetyl-beta-neuraminate = an N-acetyl-alpha-neuraminyl-(2-&gt;3)-beta-D-galactosyl-(1-&gt;3)-N-acetyl-alpha-D-galactosaminyl derivative + CMP + H(+). Its pathway is protein modification; protein glycosylation. In terms of biological role, responsible for the synthesis of the sequence NeuAc-alpha-2,3-Gal-beta-1,3-GalNAc- found on sugar chains O-linked to Thr or Ser and also as a terminal sequence on certain gangliosides. SIAT4A and SIAT4B sialylate the same acceptor substrates but exhibit different Km values. In Gallus gallus (Chicken), this protein is CMP-N-acetylneuraminate-beta-galactosamide-alpha-2,3-sialyltransferase 1 (ST3GAL1).